We begin with the raw amino-acid sequence, 492 residues long: Katanin p60 ATPase-containing subunit A1 (492 aa).

Residues 80–186 form a disordered region; that stretch reads STPPKASQQE…ESEPKKFDST (107 aa). Positions 145–171 are enriched in basic and acidic residues; it reads PNDKGKAVRGREKKDQQNKGKEEKSKS. ATP is bound at residue 250-257; the sequence is GPPGTGKT.

The protein belongs to the AAA ATPase family. Katanin p60 subunit A1 subfamily. In terms of assembly, can homooligomerize into hexameric rings, which may be promoted by interaction with microtubules. Interacts with KATNB1, which may serve as a targeting subunit.

Its subcellular location is the cytoplasm. The protein localises to the cytoskeleton. It localises to the microtubule organizing center. It is found in the centrosome. The protein resides in the spindle pole. Its subcellular location is the spindle. It catalyses the reaction n ATP + n H2O + a microtubule = n ADP + n phosphate + (n+1) alpha/beta tubulin heterodimers.. Its activity is regulated as follows. ATPase activity is stimulated by microtubules, which promote homooligomerization. ATP-dependent microtubule severing is stimulated by interaction with KATNB1. Its function is as follows. Catalytic subunit of a complex which severs microtubules in an ATP-dependent manner. Microtubule severing may promote rapid reorganization of cellular microtubule arrays and the release of microtubules from the centrosome following nucleation. This chain is Katanin p60 ATPase-containing subunit A1, found in Gallus gallus (Chicken).